A 545-amino-acid chain; its full sequence is Signal peptide peptidase-like 4 (545 aa).

The first 25 residues, 1-25, serve as a signal peptide directing secretion; that stretch reads MGTSSPEMAAALLLVMAALAGVAAG. Residues 26–193 are Lumenal-facing; sequence GDIVHQDDEA…PDRPLVDTAE (168 aa). N-linked (GlcNAc...) asparagine glycosylation is found at Asn-81 and Asn-147. The PA domain occupies 90–170; sequence PIDCCDPPTQ…PKDAGNDLQK (81 aa). A helical transmembrane segment spans residues 194 to 214; it reads VFLWLMAVGTILCASYWSAWS. The Cytoplasmic segment spans residues 215–246; sequence AREAVIEQEKLLKDGHESSLNLEAGGSSGMVD. Residues 247 to 267 traverse the membrane as a helical segment; that stretch reads INMTSAILFVVIASCFLIMLY. The Lumenal portion of the chain corresponds to 268-276; that stretch reads KLMSHWFVE. Residues 277-297 form a helical membrane-spanning segment; the sequence is LLVVIFCIGGVEGLQTCLVAL. The Cytoplasmic portion of the chain corresponds to 298-317; that stretch reads LSRWFKPAAESFVKVPFFGA. Residues 318 to 338 traverse the membrane as a helical segment; the sequence is VSYLTIAVCPFCIVFAVIWAV. At 339–343 the chain is on the lumenal side; the sequence is YRRMT. The chain crosses the membrane as a helical span at residues 344 to 364; it reads YAWIGQDILGIALIVTVIQIV. Over 365–373 the chain is Cytoplasmic; it reads RIPNLKVGS. The chain crosses the membrane as a helical span at residues 374 to 394; sequence VLLSCSFLYDIFWVFISKMWF. The active site involves Asp-383. Residues 395-427 lie on the Lumenal side of the membrane; sequence HESVMIVVARGDKTDEDGVPMLLKIPRMFDPWG. Residues 428-448 form a helical membrane-spanning segment; sequence GFSIIGFGDILLPGLLIAFAL. Asp-436 is a catalytic residue. The Cytoplasmic portion of the chain corresponds to 449 to 460; that stretch reads RYDWAAKKTLQS. Residues 461–481 form a helical membrane-spanning segment; it reads GYFLWSMVAYGSGLMITYVAL. The Lumenal segment spans residues 482–485; sequence NLMD. A helical transmembrane segment spans residues 486-506; sequence GHGQPALLYIVPFTLGTFIAL. Residues 490–492 carry the PAL motif; that stretch reads PAL. Residues 507–545 are Cytoplasmic-facing; the sequence is GRKRGELRNLWTRGQPERVCTHMHMQPSPKDTNCDAVSS.

Belongs to the peptidase A22B family. In terms of processing, glycosylated.

It is found in the endosome membrane. Its function is as follows. Intramembrane-cleaving aspartic protease (I-CLiP) that cleaves type II membrane signal peptides in the hydrophobic plane of the membrane. This Oryza sativa subsp. japonica (Rice) protein is Signal peptide peptidase-like 4 (SPPL4).